The sequence spans 640 residues: Pleckstrin homology-like domain family B member 3 (640 aa).

Disordered regions lie at residues 1-100, 162-189, 241-262, 387-412, and 476-504; these read MGTR…AARR, LEQQ…ERDR, LERE…VPDP, GLQR…RPLS, and REGT…PHPP. The segment covering 76 to 90 has biased composition (low complexity); the sequence is PPIAMAATPPASTSS. Positions 104–327 form a coiled coil; that stretch reads QQLEALTRVA…ERSRLLELNC (224 aa). The segment covering 170–189 has biased composition (basic and acidic residues); that stretch reads QRGRQQREQEQRRLSQERDR. Residues 454–481 adopt a coiled-coil conformation; it reads DIAHMERLLQQAMAERERLLKAREGTRR. Positions 495–504 are enriched in pro residues; that stretch reads TAPPTPPHPP. Residues 532-635 enclose the PH domain; it reads GCCCRGPLVK…WMDVIVTAAD (104 aa).

The protein is Pleckstrin homology-like domain family B member 3 (PHLDB3) of Homo sapiens (Human).